A 369-amino-acid polypeptide reads, in one-letter code: Cobalt-precorrin-5B C(1)-methyltransferase (369 aa).

The protein belongs to the CbiD family.

It carries out the reaction Co-precorrin-5B + S-adenosyl-L-methionine = Co-precorrin-6A + S-adenosyl-L-homocysteine. It functions in the pathway cofactor biosynthesis; adenosylcobalamin biosynthesis; cob(II)yrinate a,c-diamide from sirohydrochlorin (anaerobic route): step 6/10. Its function is as follows. Catalyzes the methylation of C-1 in cobalt-precorrin-5B to form cobalt-precorrin-6A. The sequence is that of Cobalt-precorrin-5B C(1)-methyltransferase from Geobacter metallireducens (strain ATCC 53774 / DSM 7210 / GS-15).